We begin with the raw amino-acid sequence, 41 residues long: Large ribosomal subunit protein bL36 (41 aa).

Belongs to the bacterial ribosomal protein bL36 family.

The sequence is that of Large ribosomal subunit protein bL36 from Nitrobacter winogradskyi (strain ATCC 25391 / DSM 10237 / CIP 104748 / NCIMB 11846 / Nb-255).